A 326-amino-acid chain; its full sequence is Flotillin-like protein FloA (326 aa).

Residues 3 to 23 traverse the membrane as a helical segment; sequence FTTIVVILLVIACIVVLFFIG.

The protein belongs to the flotillin-like FloA family. Homooligomerizes.

The protein resides in the cell membrane. Its subcellular location is the membrane raft. Found in functional membrane microdomains (FMM) that may be equivalent to eukaryotic membrane rafts. FMMs are highly dynamic and increase in number as cells age. Flotillins are thought to be important factors in membrane fluidity. The polypeptide is Flotillin-like protein FloA (Desulforapulum autotrophicum (strain ATCC 43914 / DSM 3382 / VKM B-1955 / HRM2) (Desulfobacterium autotrophicum)).